We begin with the raw amino-acid sequence, 297 residues long: Light-independent protochlorophyllide reductase iron-sulfur ATP-binding protein (297 aa).

ATP is bound by residues 41–46 and Lys70; that span reads GIGKST. Ser45 is a Mg(2+) binding site. [4Fe-4S] cluster is bound by residues Cys126 and Cys160. ATP-binding positions include 211–212 and 235–237; these read NR and PDL.

This sequence belongs to the NifH/BchL/ChlL family. Homodimer. Protochlorophyllide reductase is composed of three subunits; BchL, BchN and BchB. The cofactor is [4Fe-4S] cluster.

It carries out the reaction chlorophyllide a + oxidized 2[4Fe-4S]-[ferredoxin] + 2 ADP + 2 phosphate = protochlorophyllide a + reduced 2[4Fe-4S]-[ferredoxin] + 2 ATP + 2 H2O. Its pathway is porphyrin-containing compound metabolism; bacteriochlorophyll biosynthesis (light-independent). Its function is as follows. Component of the dark-operative protochlorophyllide reductase (DPOR) that uses Mg-ATP and reduced ferredoxin to reduce ring D of protochlorophyllide (Pchlide) to form chlorophyllide a (Chlide). This reaction is light-independent. The L component serves as a unique electron donor to the NB-component of the complex, and binds Mg-ATP. This Methylorubrum extorquens (strain PA1) (Methylobacterium extorquens) protein is Light-independent protochlorophyllide reductase iron-sulfur ATP-binding protein.